Here is a 1076-residue protein sequence, read N- to C-terminus: Carbamoyl phosphate synthase large chain (1076 aa).

The interval Met-1–Glu-403 is carboxyphosphate synthetic domain. ATP contacts are provided by Arg-129, Arg-169, Gly-175, Gly-176, Glu-208, Leu-210, Glu-215, Gly-241, Val-242, His-243, Gln-285, and Glu-299. In terms of domain architecture, ATP-grasp 1 spans Asp-133–Val-328. Mg(2+) contacts are provided by Gln-285, Glu-299, and Asn-301. 3 residues coordinate Mn(2+): Gln-285, Glu-299, and Asn-301. The segment at Thr-404 to Ala-553 is oligomerization domain. The carbamoyl phosphate synthetic domain stretch occupies residues Glu-554–Gly-935. Residues Gln-678–Ala-869 form the ATP-grasp 2 domain. Arg-714, His-753, Leu-755, Glu-760, Gly-785, Val-786, His-787, Ser-788, Gln-828, and Glu-840 together coordinate ATP. The Mg(2+) site is built by Gln-828, Glu-840, and Asn-842. Mn(2+)-binding residues include Gln-828, Glu-840, and Asn-842. The MGS-like domain maps to Glu-936 to Gln-1076. The interval Glu-936–Gln-1076 is allosteric domain.

Belongs to the CarB family. In terms of assembly, composed of two chains; the small (or glutamine) chain promotes the hydrolysis of glutamine to ammonia, which is used by the large (or ammonia) chain to synthesize carbamoyl phosphate. Tetramer of heterodimers (alpha,beta)4. Mg(2+) is required as a cofactor. Mn(2+) serves as cofactor.

It catalyses the reaction hydrogencarbonate + L-glutamine + 2 ATP + H2O = carbamoyl phosphate + L-glutamate + 2 ADP + phosphate + 2 H(+). It carries out the reaction hydrogencarbonate + NH4(+) + 2 ATP = carbamoyl phosphate + 2 ADP + phosphate + 2 H(+). It participates in amino-acid biosynthesis; L-arginine biosynthesis; carbamoyl phosphate from bicarbonate: step 1/1. Its pathway is pyrimidine metabolism; UMP biosynthesis via de novo pathway; (S)-dihydroorotate from bicarbonate: step 1/3. Large subunit of the glutamine-dependent carbamoyl phosphate synthetase (CPSase). CPSase catalyzes the formation of carbamoyl phosphate from the ammonia moiety of glutamine, carbonate, and phosphate donated by ATP, constituting the first step of 2 biosynthetic pathways, one leading to arginine and/or urea and the other to pyrimidine nucleotides. The large subunit (synthetase) binds the substrates ammonia (free or transferred from glutamine from the small subunit), hydrogencarbonate and ATP and carries out an ATP-coupled ligase reaction, activating hydrogencarbonate by forming carboxy phosphate which reacts with ammonia to form carbamoyl phosphate. This chain is Carbamoyl phosphate synthase large chain, found in Halomonas eurihalina.